Consider the following 329-residue polypeptide: Ketol-acid reductoisomerase (NADP(+)) (329 aa).

The KARI N-terminal Rossmann domain maps to 2-182 (VEIYYDDDAS…GGTRAGALRT (181 aa)). Residues 25-28 (YGSQ), Ser-51, and Ser-53 each bind NADP(+). The active site involves His-108. Residue Gly-134 coordinates NADP(+). Positions 183-328 (TFTEETETDL…AKLRPMMSWI (146 aa)) constitute a KARI C-terminal knotted domain. Mg(2+) contacts are provided by Asp-191, Glu-195, Glu-227, and Glu-231. A substrate-binding site is contributed by Ser-252.

It belongs to the ketol-acid reductoisomerase family. Mg(2+) is required as a cofactor.

The enzyme catalyses (2R)-2,3-dihydroxy-3-methylbutanoate + NADP(+) = (2S)-2-acetolactate + NADPH + H(+). The catalysed reaction is (2R,3R)-2,3-dihydroxy-3-methylpentanoate + NADP(+) = (S)-2-ethyl-2-hydroxy-3-oxobutanoate + NADPH + H(+). It functions in the pathway amino-acid biosynthesis; L-isoleucine biosynthesis; L-isoleucine from 2-oxobutanoate: step 2/4. It participates in amino-acid biosynthesis; L-valine biosynthesis; L-valine from pyruvate: step 2/4. Involved in the biosynthesis of branched-chain amino acids (BCAA). Catalyzes an alkyl-migration followed by a ketol-acid reduction of (S)-2-acetolactate (S2AL) to yield (R)-2,3-dihydroxy-isovalerate. In the isomerase reaction, S2AL is rearranged via a Mg-dependent methyl migration to produce 3-hydroxy-3-methyl-2-ketobutyrate (HMKB). In the reductase reaction, this 2-ketoacid undergoes a metal-dependent reduction by NADPH to yield (R)-2,3-dihydroxy-isovalerate. The sequence is that of Ketol-acid reductoisomerase (NADP(+)) from Frankia casuarinae (strain DSM 45818 / CECT 9043 / HFP020203 / CcI3).